The primary structure comprises 122 residues: Large ribosomal subunit protein uL14 (122 aa).

This sequence belongs to the universal ribosomal protein uL14 family. In terms of assembly, part of the 50S ribosomal subunit. Forms a cluster with proteins L3 and L19. In the 70S ribosome, L14 and L19 interact and together make contacts with the 16S rRNA in bridges B5 and B8.

Its function is as follows. Binds to 23S rRNA. Forms part of two intersubunit bridges in the 70S ribosome. This chain is Large ribosomal subunit protein uL14, found in Clostridium tetani (strain Massachusetts / E88).